Here is a 432-residue protein sequence, read N- to C-terminus: Serine hydroxymethyltransferase (432 aa).

Residues leucine 131 and 135–137 each bind (6S)-5,6,7,8-tetrahydrofolate; that span reads GHL. Lysine 240 is subject to N6-(pyridoxal phosphate)lysine.

This sequence belongs to the SHMT family. In terms of assembly, homodimer. It depends on pyridoxal 5'-phosphate as a cofactor.

It localises to the cytoplasm. It carries out the reaction (6R)-5,10-methylene-5,6,7,8-tetrahydrofolate + glycine + H2O = (6S)-5,6,7,8-tetrahydrofolate + L-serine. Its pathway is one-carbon metabolism; tetrahydrofolate interconversion. It functions in the pathway amino-acid biosynthesis; glycine biosynthesis; glycine from L-serine: step 1/1. In terms of biological role, catalyzes the reversible interconversion of serine and glycine with tetrahydrofolate (THF) serving as the one-carbon carrier. This reaction serves as the major source of one-carbon groups required for the biosynthesis of purines, thymidylate, methionine, and other important biomolecules. Also exhibits THF-independent aldolase activity toward beta-hydroxyamino acids, producing glycine and aldehydes, via a retro-aldol mechanism. The sequence is that of Serine hydroxymethyltransferase from Bradyrhizobium diazoefficiens (strain JCM 10833 / BCRC 13528 / IAM 13628 / NBRC 14792 / USDA 110).